A 381-amino-acid chain; its full sequence is Protein COS1 (381 aa).

The Cytoplasmic segment spans residues 1–42 (MKENELKNEKSVDVLSFKQLESQKIVLPQDLFRSSFTWFCYE). Residues 43–63 (IYKSLAFRIWMLLWLPLSVWW) form a helical membrane-spanning segment. The Extracellular segment spans residues 64-72 (KLSNNCIYP). A helical transmembrane segment spans residues 73–93 (LIVSLLVLFLGPIFVLVICGL). The Cytoplasmic portion of the chain corresponds to 94–231 (SRKRSLSKQL…YRFKLTWFLK (138 aa)). The chain crosses the membrane as a helical span at residues 232 to 252 (RISNIFMLIPFLNFLCCIYVS). Residues 253–254 (RG) lie on the Extracellular side of the membrane. The chain crosses the membrane as a helical span at residues 255–275 (MCLLLRTFYLGWILFMLVQGF). Residues 276-381 (QNMRMIVLSV…QLSCSEESLA (106 aa)) are Cytoplasmic-facing.

Belongs to the DUP/COS family.

The protein localises to the membrane. The protein is Protein COS1 (COS1) of Saccharomyces cerevisiae (strain ATCC 204508 / S288c) (Baker's yeast).